Consider the following 135-residue polypeptide: uncharacterized protein (135 aa).

The HotDog ACOT-type domain occupies 8-123 (PQGTIVLKTL…IFIYVAIDET (116 aa)).

This sequence belongs to the acyl coenzyme A hydrolase family.

This is an uncharacterized protein from Buchnera aphidicola subsp. Schizaphis graminum (strain Sg).